We begin with the raw amino-acid sequence, 138 residues long: Nucleoside diphosphate kinase (138 aa).

ATP contacts are provided by lysine 9, phenylalanine 57, arginine 85, threonine 91, arginine 102, and asparagine 112. Histidine 115 serves as the catalytic Pros-phosphohistidine intermediate.

This sequence belongs to the NDK family. As to quaternary structure, homotetramer. It depends on Mg(2+) as a cofactor.

It is found in the cytoplasm. It carries out the reaction a 2'-deoxyribonucleoside 5'-diphosphate + ATP = a 2'-deoxyribonucleoside 5'-triphosphate + ADP. The enzyme catalyses a ribonucleoside 5'-diphosphate + ATP = a ribonucleoside 5'-triphosphate + ADP. In terms of biological role, major role in the synthesis of nucleoside triphosphates other than ATP. The ATP gamma phosphate is transferred to the NDP beta phosphate via a ping-pong mechanism, using a phosphorylated active-site intermediate. This is Nucleoside diphosphate kinase from Desulfatibacillum aliphaticivorans.